Reading from the N-terminus, the 351-residue chain is Holliday junction branch migration complex subunit RuvB (351 aa).

A disordered region spans residues Met-1–Thr-22. The large ATPase domain (RuvB-L) stretch occupies residues Ser-2–Tyr-185. ATP is bound by residues Leu-24, Arg-25, Gly-66, Lys-69, Thr-70, Thr-71, Glu-132–Phe-134, Arg-175, Tyr-185, and Arg-222. Thr-70 is a binding site for Mg(2+). Residues Thr-186 to Glu-256 form a small ATPAse domain (RuvB-S) region. The head domain (RuvB-H) stretch occupies residues Ala-259 to Asp-351. Positions 295, 314, and 319 each coordinate DNA.

This sequence belongs to the RuvB family. Homohexamer. Forms an RuvA(8)-RuvB(12)-Holliday junction (HJ) complex. HJ DNA is sandwiched between 2 RuvA tetramers; dsDNA enters through RuvA and exits via RuvB. An RuvB hexamer assembles on each DNA strand where it exits the tetramer. Each RuvB hexamer is contacted by two RuvA subunits (via domain III) on 2 adjacent RuvB subunits; this complex drives branch migration. In the full resolvosome a probable DNA-RuvA(4)-RuvB(12)-RuvC(2) complex forms which resolves the HJ.

It localises to the cytoplasm. The catalysed reaction is ATP + H2O = ADP + phosphate + H(+). The RuvA-RuvB-RuvC complex processes Holliday junction (HJ) DNA during genetic recombination and DNA repair, while the RuvA-RuvB complex plays an important role in the rescue of blocked DNA replication forks via replication fork reversal (RFR). RuvA specifically binds to HJ cruciform DNA, conferring on it an open structure. The RuvB hexamer acts as an ATP-dependent pump, pulling dsDNA into and through the RuvAB complex. RuvB forms 2 homohexamers on either side of HJ DNA bound by 1 or 2 RuvA tetramers; 4 subunits per hexamer contact DNA at a time. Coordinated motions by a converter formed by DNA-disengaged RuvB subunits stimulates ATP hydrolysis and nucleotide exchange. Immobilization of the converter enables RuvB to convert the ATP-contained energy into a lever motion, pulling 2 nucleotides of DNA out of the RuvA tetramer per ATP hydrolyzed, thus driving DNA branch migration. The RuvB motors rotate together with the DNA substrate, which together with the progressing nucleotide cycle form the mechanistic basis for DNA recombination by continuous HJ branch migration. Branch migration allows RuvC to scan DNA until it finds its consensus sequence, where it cleaves and resolves cruciform DNA. The chain is Holliday junction branch migration complex subunit RuvB from Bradyrhizobium diazoefficiens (strain JCM 10833 / BCRC 13528 / IAM 13628 / NBRC 14792 / USDA 110).